We begin with the raw amino-acid sequence, 136 residues long: MPIQLEIVTAERVVLSEEVDMVSAPSVEGRVGILPRHEPLLTVLQPGELHYVKNGVSMPYAISGGFMEVLPNRVTILADTAERADEIDETRAEQARLQAEQAMRDRQSTEDLARAEIALRRATVRLQVAKLRRNRQ.

Belongs to the ATPase epsilon chain family. F-type ATPases have 2 components, CF(1) - the catalytic core - and CF(0) - the membrane proton channel. CF(1) has five subunits: alpha(3), beta(3), gamma(1), delta(1), epsilon(1). CF(0) has three main subunits: a, b and c.

It is found in the cell membrane. Produces ATP from ADP in the presence of a proton gradient across the membrane. This Herpetosiphon aurantiacus (strain ATCC 23779 / DSM 785 / 114-95) protein is ATP synthase epsilon chain.